The primary structure comprises 97 residues: UPF0235 protein cbdbA1230 (97 aa).

Belongs to the UPF0235 family.

The protein is UPF0235 protein cbdbA1230 of Dehalococcoides mccartyi (strain CBDB1).